Consider the following 328-residue polypeptide: 5,10-methylenetetrahydromethanopterin reductase (328 aa).

The protein belongs to the mer family.

It is found in the cytoplasm. It catalyses the reaction 5-methyl-5,6,7,8-tetrahydromethanopterin + oxidized coenzyme F420-(gamma-L-Glu)(n) + H(+) = 5,10-methylenetetrahydromethanopterin + reduced coenzyme F420-(gamma-L-Glu)(n). It participates in one-carbon metabolism; methanogenesis from CO(2); methyl-coenzyme M from 5,10-methylene-5,6,7,8-tetrahydromethanopterin: step 1/2. Its function is as follows. Catalyzes the reversible reduction of methylene-H(4)MPT to methyl-H(4)MPT. The protein is 5,10-methylenetetrahydromethanopterin reductase of Methanosarcina barkeri (strain Fusaro / DSM 804).